Reading from the N-terminus, the 217-residue chain is Small ribosomal subunit protein uS3 (217 aa).

The KH type-2 domain occupies 40-110 (IRDLINKGFN…EVYINIHEVR (71 aa)).

This sequence belongs to the universal ribosomal protein uS3 family. As to quaternary structure, part of the 30S ribosomal subunit. Forms a tight complex with proteins S10 and S14.

In terms of biological role, binds the lower part of the 30S subunit head. Binds mRNA in the 70S ribosome, positioning it for translation. The protein is Small ribosomal subunit protein uS3 of Rickettsia africae (strain ESF-5).